Consider the following 392-residue polypeptide: Protein NolC (392 aa).

Residues 2–71 form the J domain; it reads KRDLYETLGV…RAAYDRYGHA (70 aa). Disordered regions lie at residues 103–142 and 157–244; these read RRDD…QDGA and LGRE…TGLR. Residues 157 to 170 show a composition bias toward basic and acidic residues; sequence LGREAGHQPEDLRH. A compositionally biased stretch (low complexity) spans 171 to 185; it reads LPGLRPYPRRPGLLL. The segment covering 186 to 203 has biased composition (basic and acidic residues); that stretch reads DRTHLPDLRRSRSDDHRS. The segment covering 227 to 241 has biased composition (basic residues); the sequence is HRGRHAYPPLRRGRT.

This Rhizobium fredii (Sinorhizobium fredii) protein is Protein NolC (nolC).